Here is a 654-residue protein sequence, read N- to C-terminus: Dystrobrevin beta (654 aa).

Met1 carries the post-translational modification N-acetylmethionine. Residues Thr11, Thr69, Thr179, and Thr212 each carry the phosphothreonine modification. The segment at 238 to 294 (FHPVECSYCHCESMMGFRYRCQQCHNYQLCQNCFWRGHAGGPHSNQHQMKELSSWKS) adopts a ZZ-type zinc-finger fold. Zn(2+) is bound by residues Cys243, Cys246, Cys258, Cys261, Cys267, Cys270, His280, and His284. Position 394 is a phosphoserine (Ser394). The segment at 399–448 (DEEHRLIARYAARLAAEAGNMTRPPTDASFNFDANKQQRQLIAELENKNR) is syntrophin-binding region. Thr424 carries the post-translational modification Phosphothreonine. The stretch at 429-519 (NFDANKQQRQ…LEGLMKLLKA (91 aa)) forms a coiled coil. The tract at residues 520 to 562 (QATGSPHTSPTHGGGRSMPMPVRSTSAGSTPTHGPQDSLSGVG) is disordered. Polar residues-rich tracts occupy residues 521 to 530 (ATGSPHTSPT) and 542 to 558 (RSTS…QDSL).

This sequence belongs to the dystrophin family. Dystrobrevin subfamily. As to quaternary structure, interacts with dystrophin short form DP71 and syntrophins SNTG1 and SNTG2. Binds DTNBP1. Forms a specific complex composed of DMD, SNTB2 and SNTA1 in neuron; the interaction with SNTB2 and SNTA1 is DMD independent. Interacts with UTRN and dystrophin short form DP71 in the kidney and liver. Interacts with SNTB1, SNTB2 and SNTA1 in kidney and liver. Interacts with KIF5A. Interacts with HMG20A and HMG20B. Interacts with OLFM1. Interacts with PRKAR2B and PRKAR1A. Phosphorylated by PKA. Phosphorylation at Thr-11 alters the interaction with KIF5A. In terms of tissue distribution, expressed in neurons. In the isocortex, expressed most prominently in the somata (including the nuclei) and the dendrites of the pyramidal cells. Expressed in the hippocampus CA1, CA2, and CA3 neurons, namely in the initial segments of dendrites. Expressed in the Purkinje cells, molecular layer interneurons, and granule cells of cerebellum. Expressed in axon fascicles associated with the spinal trigeminal tract and in the internal capsule in the brainstem.

The protein resides in the cytoplasm. Its subcellular location is the postsynaptic density. It is found in the cell projection. The protein localises to the dendrite. It localises to the basal cell membrane. The protein resides in the postsynapse. Its subcellular location is the nucleus. Its function is as follows. Scaffolding protein that assembles DMD and SNTA1 molecules to the basal membrane of kidney cells and liver sinusoids. May function as a repressor of the SYN1 promoter through the binding of repressor element-1 (RE-1), in turn regulates SYN1 expression and may be involved in cell proliferation regulation during the early phase of neural differentiation. May be required for proper maturation and function of a subset of inhibitory synapses. This is Dystrobrevin beta from Rattus norvegicus (Rat).